The sequence spans 331 residues: Biotin synthase (331 aa).

The Radical SAM core domain occupies 43–267 (NTVQVSTLLS…LMPASYVRLS (225 aa)). [4Fe-4S] cluster is bound by residues C58, C62, and C65. The [2Fe-2S] cluster site is built by C102, C133, C193, and R265.

It belongs to the radical SAM superfamily. Biotin synthase family. In terms of assembly, homodimer. It depends on [4Fe-4S] cluster as a cofactor. [2Fe-2S] cluster serves as cofactor.

The catalysed reaction is (4R,5S)-dethiobiotin + (sulfur carrier)-SH + 2 reduced [2Fe-2S]-[ferredoxin] + 2 S-adenosyl-L-methionine = (sulfur carrier)-H + biotin + 2 5'-deoxyadenosine + 2 L-methionine + 2 oxidized [2Fe-2S]-[ferredoxin]. It participates in cofactor biosynthesis; biotin biosynthesis; biotin from 7,8-diaminononanoate: step 2/2. Functionally, catalyzes the conversion of dethiobiotin (DTB) to biotin by the insertion of a sulfur atom into dethiobiotin via a radical-based mechanism. In Alkalilimnicola ehrlichii (strain ATCC BAA-1101 / DSM 17681 / MLHE-1), this protein is Biotin synthase.